A 462-amino-acid chain; its full sequence is MILNLIILLAISIVASASNIAAYWGQNAGGDQQTLGDYCSSSPASIIILSFLDGFPNLSLNFANQCSGTFSSGLAHCSQIGSDIKSCQQQGKTILLSLGGATGNYGFSSDSEAVQFAGTLWNKFGGGKDSERPFDDAIVDGFDFDIENKDQTGYAALATQLRKYFSTGTKSYYLSAAPQCPYPDESVGDLMSQVDLDFAFIQFYNNYCSLNQQFNWNSWSNYARGKSIKLYLGLPGSSSSAGSGFVGLSTVQRVVASIKGDSSFGGISIWDISSAENGGYLNQLHQALSGSGSPAAPSNSYQPNTPLTRTYGGSTATASAYISVGFTAGATHGSTTTNDLLAWIDSLFGSSQSSVQQYATPVQSVTATPQPVAATTTSAPKPTASAFNWFGWFDGTTTSTTLQTVYSTVPADQTVYVTLTTTVGSQMLQSLFDKRDVIAEAKSTNLQICWLLFIPLLALICS.

The N-terminal stretch at 1-17 is a signal peptide; the sequence is MILNLIILLAISIVASA. Residues 18 to 291 enclose the GH18 domain; sequence SNIAAYWGQN…NQLHQALSGS (274 aa). N-linked (GlcNAc...) asparagine glycosylation is present at N57. E147 functions as the Proton donor in the catalytic mechanism.

The protein belongs to the glycosyl hydrolase 18 family. Chitinase class V subfamily.

The protein localises to the secreted. The catalysed reaction is Random endo-hydrolysis of N-acetyl-beta-D-glucosaminide (1-&gt;4)-beta-linkages in chitin and chitodextrins.. Its function is as follows. Chitinase involved in the remodeling of chitin in the fungal cell wall. Plays a role in cell separation. The polypeptide is Chitinase 1 (CHT1) (Candida albicans (strain SC5314 / ATCC MYA-2876) (Yeast)).